A 128-amino-acid polypeptide reads, in one-letter code: Small ribosomal subunit protein uS13 (128 aa).

The interval 85 to 128 (GSYRGLRHRRSLPVRGQRTHTNARTRKGPRRGTVANKKKATGKT) is disordered. Residues 89–128 (GLRHRRSLPVRGQRTHTNARTRKGPRRGTVANKKKATGKT) show a composition bias toward basic residues.

It belongs to the universal ribosomal protein uS13 family. In terms of assembly, part of the 30S ribosomal subunit. Forms a loose heterodimer with protein S19. Forms two bridges to the 50S subunit in the 70S ribosome.

In terms of biological role, located at the top of the head of the 30S subunit, it contacts several helices of the 16S rRNA. In the 70S ribosome it contacts the 23S rRNA (bridge B1a) and protein L5 of the 50S subunit (bridge B1b), connecting the 2 subunits; these bridges are implicated in subunit movement. Contacts the tRNAs in the A and P-sites. The chain is Small ribosomal subunit protein uS13 from Solibacter usitatus (strain Ellin6076).